Reading from the N-terminus, the 247-residue chain is MTRRVKTGIPGVDEILHGGIPERNVVLLSGGPGTGKTIFSQQFLWNGLKMGEPGIYVALEEHPVQVRQNMAQFGWDVKPYEEKGMFAMVDAFTAGIGKSKEYEKYIVHDLTDIREFIEVLRQAIRDINAKRVVVDSVTTLYINKPAMARSIILQLKRVLAGTGCTSIFVSQVSVGERGFGGPGVEHGVDGIIRLDLDEIDGELKRSLIVWKMRGTSHSMRRHPFDITDKGIIVYPDKVLKRGKVLEL.

The region spanning 3-247 (RRVKTGIPGV…VLKRGKVLEL (245 aa)) is the KaiC domain. 30–37 (GGPGTGKT) serves as a coordination point for ATP.

Belongs to the UPF0273 family.

The protein is UPF0273 protein PH0284 of Pyrococcus horikoshii (strain ATCC 700860 / DSM 12428 / JCM 9974 / NBRC 100139 / OT-3).